Reading from the N-terminus, the 570-residue chain is Peptidyl-prolyl cis-trans isomerase FKBP9 (570 aa).

Positions M1–A24 are cleaved as a signal peptide. PPIase FKBP-type domains are found at residues G54–W142, S166–H254, G278–H365, and G389–V477. N174, N286, N302, and N397 each carry an N-linked (GlcNAc...) asparagine glycan. EF-hand domains lie at W488–T523 and N533–D568. Ca(2+)-binding residues include D501, D503, N505, E507, E512, D546, N548, D550, K552, and E557. The short motif at H567 to L570 is the Prevents secretion from ER element.

In terms of processing, phosphorylated. As to expression, predominantly expressed in heart, skeletal muscle, lung, liver and kidney. Lower levels found in brain, spleen and testis.

It localises to the endoplasmic reticulum lumen. The catalysed reaction is [protein]-peptidylproline (omega=180) = [protein]-peptidylproline (omega=0). With respect to regulation, inhibited by FK506. Its function is as follows. PPIases accelerate the folding of proteins during protein synthesis. The polypeptide is Peptidyl-prolyl cis-trans isomerase FKBP9 (Fkbp9) (Mus musculus (Mouse)).